Reading from the N-terminus, the 626-residue chain is DNA primase (626 aa).

The segment at 39–63 (CPFHGEKTPSFSVSPEKQIFHCFGC) adopts a CHC2-type zinc-finger fold. The Toprim domain maps to 264-346 (EEITLMEGFM…DVFVLQLPAG (83 aa)). Residues glutamate 270, aspartate 314, and aspartate 316 each coordinate Mg(2+).

This sequence belongs to the DnaG primase family. Monomer. Interacts with DnaB. Zn(2+) serves as cofactor. Mg(2+) is required as a cofactor.

The catalysed reaction is ssDNA + n NTP = ssDNA/pppN(pN)n-1 hybrid + (n-1) diphosphate.. In terms of biological role, RNA polymerase that catalyzes the synthesis of short RNA molecules used as primers for DNA polymerase during DNA replication. This is DNA primase from Listeria innocua serovar 6a (strain ATCC BAA-680 / CLIP 11262).